Reading from the N-terminus, the 188-residue chain is Elongation factor P (188 aa).

It belongs to the elongation factor P family.

It is found in the cytoplasm. Its pathway is protein biosynthesis; polypeptide chain elongation. Involved in peptide bond synthesis. Stimulates efficient translation and peptide-bond synthesis on native or reconstituted 70S ribosomes in vitro. Probably functions indirectly by altering the affinity of the ribosome for aminoacyl-tRNA, thus increasing their reactivity as acceptors for peptidyl transferase. This chain is Elongation factor P, found in Anaplasma marginale (strain Florida).